We begin with the raw amino-acid sequence, 272 residues long: MTLQEQIMKALHVQPVIDPKAEIRKRVDFLKDYVKKTGAKGFVLGISGGQDSTLAGRLAQLAVEEIRNEGGNATFIAVRLPYKVQKDEDDAQLALQFIQADQSVAFDIASTVDAFSNQYENLLGESLTDFNKGNVKARIRMVTQYAIGGQNGLLVIGTDHAAEAVTGFFTKFGDGGADLLPLTGLTKRQGRALLQELGADERLYLKMPTADLLDEKPGQADETELGITYDQLDDYLEGKAVPTDVAEKIEKRYTVSEHKRQVPASMFDDWWK.

45–52 (GISGGQDS) contacts ATP. Residue aspartate 51 coordinates Mg(2+). Arginine 138 lines the deamido-NAD(+) pocket. Threonine 158 serves as a coordination point for ATP. Glutamate 163 serves as a coordination point for Mg(2+). The deamido-NAD(+) site is built by lysine 171 and aspartate 178. Residues lysine 187 and threonine 209 each coordinate ATP. 258 to 259 (HK) contacts deamido-NAD(+).

Belongs to the NAD synthetase family. In terms of assembly, homodimer.

It carries out the reaction deamido-NAD(+) + NH4(+) + ATP = AMP + diphosphate + NAD(+) + H(+). It functions in the pathway cofactor biosynthesis; NAD(+) biosynthesis; NAD(+) from deamido-NAD(+) (ammonia route): step 1/1. Its function is as follows. Catalyzes the ATP-dependent amidation of deamido-NAD to form NAD. Uses ammonia as a nitrogen source. This is NH(3)-dependent NAD(+) synthetase from Bacillus cereus (strain AH187).